The primary structure comprises 189 residues: UPF0251 protein MTH_1178 (189 aa).

It belongs to the UPF0251 family.

The chain is UPF0251 protein MTH_1178 from Methanothermobacter thermautotrophicus (strain ATCC 29096 / DSM 1053 / JCM 10044 / NBRC 100330 / Delta H) (Methanobacterium thermoautotrophicum).